A 124-amino-acid chain; its full sequence is Fluoride-specific ion channel FluC (124 aa).

The next 4 membrane-spanning stretches (helical) occupy residues 4–24 (VLLVALGGSIGAVFRYLISIF), 35–55 (FGTLVVNVIGSFFMGVIYALG), 60–80 (ISPELKALIGVGLLGALTTFS), and 95–115 (WLKAILNVVLNLSLCLFMVYL). Na(+)-binding residues include Gly-74 and Thr-77.

Belongs to the fluoride channel Fluc/FEX (TC 1.A.43) family.

The protein localises to the cell inner membrane. It carries out the reaction fluoride(in) = fluoride(out). Na(+) is not transported, but it plays an essential structural role and its presence is essential for fluoride channel function. In terms of biological role, fluoride-specific ion channel. Important for reducing fluoride concentration in the cell, thus reducing its toxicity. The sequence is that of Fluoride-specific ion channel FluC from Shewanella putrefaciens (strain CN-32 / ATCC BAA-453).